A 116-amino-acid chain; its full sequence is Putative pterin-4-alpha-carbinolamine dehydratase (116 aa).

This sequence belongs to the pterin-4-alpha-carbinolamine dehydratase family.

The catalysed reaction is (4aS,6R)-4a-hydroxy-L-erythro-5,6,7,8-tetrahydrobiopterin = (6R)-L-erythro-6,7-dihydrobiopterin + H2O. In Paracidovorax citrulli (strain AAC00-1) (Acidovorax citrulli), this protein is Putative pterin-4-alpha-carbinolamine dehydratase.